A 208-amino-acid polypeptide reads, in one-letter code: Major capsid protein (208 aa).

The segment covering 1–16 (MSTVVVKGNVNGGVQQ) has biased composition (low complexity). The interval 1 to 69 (MSTVVVKGNV…TGVPRGRGSS (69 aa)) is disordered. 2 stretches are compositionally biased toward basic residues: residues 17-30 (PRRR…RRAN) and 44-61 (PRRR…RRTG).

Belongs to the luteoviruses capsid protein family.

It is found in the virion. Major capsid protein that self-assembles to form an icosahedral capsid with a T=3 symmetry, about 23 nm in diameter, and consisting of 180 capsid proteins monomers. Most of the 180 monomers are the major capsid protein, but a small percentage contain the minor capsid protein, which has a long C-terminal extension. The sequence is that of Major capsid protein from Potato leafroll virus (strain Potato/Netherlands/Wageningen/1989) (PLrV).